We begin with the raw amino-acid sequence, 583 residues long: Estrogen receptor (583 aa).

Residues 1-138 (MYPEESRGSG…GFEITKNTRF (138 aa)) form a modulating region. 2 consecutive NR C4-type zinc fingers follow at residues 139 to 159 (CAVC…CEGC) and 175 to 199 (CPAT…LRKC). The segment at residues 139–204 (CAVCSDYASG…RLRKCYEVGM (66 aa)) is a DNA-binding region (nuclear receptor). Residues 205–265 (MKGGMRKDRG…PGGRSSLNNM (61 aa)) are hinge. The tract at residues 220-263 (EKHGPAQRQTSQNLPTHKASPQDGRKRAMSSSSTSGPGGRSSLN) is disordered. An NR LBD domain is found at 266–501 (PPDQVLLLLQ…DLLLEMLDAH (236 aa)). Residues 506 to 583 (PVKPSQSWSQ…GSHSDCTRIP (78 aa)) are disordered. A compositionally biased stretch (low complexity) spans 539 to 551 (ASSAGSSSGPQGS).

The protein belongs to the nuclear hormone receptor family. NR3 subfamily. As to quaternary structure, binds DNA as a homodimer. Can form a heterodimer with ER-beta.

It localises to the nucleus. Its function is as follows. The steroid hormones and their receptors are involved in the regulation of eukaryotic gene expression and affect cellular proliferation and differentiation in target tissues. The protein is Estrogen receptor (esr1) of Oreochromis aureus (Israeli tilapia).